The primary structure comprises 364 residues: Peroxidase (364 aa).

An N-terminal signal peptide occupies residues 1–20; the sequence is MKLSLFSTFAAVIIGALALP. Position 21 is a pyrrolidone carboxylic acid (Gln21). 4 disulfide bridges follow: Cys32-Cys44, Cys43-Cys313, Cys63-Cys149, and Cys277-Cys342. The active-site Proton acceptor is the His76. The Ca(2+) site is built by Asp77, Gly95, Asp97, and Ser99. The N-linked (GlcNAc...) (high mannose) asparagine glycan is linked to Asn163. Position 204 (His204) interacts with heme b. Residues Ser205, Asp222, Thr224, Val227, and Asp229 each contribute to the Ca(2+) site.

It belongs to the peroxidase family. Ligninase subfamily. Ca(2+) serves as cofactor. The cofactor is heme b.

Its subcellular location is the secreted. The catalysed reaction is 2 a phenolic donor + H2O2 = 2 a phenolic radical donor + 2 H2O. In Arthromyces ramosus, this protein is Peroxidase.